Here is a 753-residue protein sequence, read N- to C-terminus: 5-methyltetrahydropteroyltriglutamate--homocysteine methyltransferase (753 aa).

Residues 17 to 20 (RELK) and Lys117 each bind 5-methyltetrahydropteroyltri-L-glutamate. L-homocysteine is bound by residues 431–433 (IGS) and Glu484. Residues 431 to 433 (IGS) and Glu484 contribute to the L-methionine site. 5-methyltetrahydropteroyltri-L-glutamate-binding positions include 515–516 (RC) and Trp561. Asp599 provides a ligand contact to L-homocysteine. Residue Asp599 participates in L-methionine binding. Glu605 is a 5-methyltetrahydropteroyltri-L-glutamate binding site. 3 residues coordinate Zn(2+): His641, Cys643, and Glu665. The active-site Proton donor is the His694. A Zn(2+)-binding site is contributed by Cys726.

This sequence belongs to the vitamin-B12 independent methionine synthase family. It depends on Zn(2+) as a cofactor.

The catalysed reaction is 5-methyltetrahydropteroyltri-L-glutamate + L-homocysteine = tetrahydropteroyltri-L-glutamate + L-methionine. It functions in the pathway amino-acid biosynthesis; L-methionine biosynthesis via de novo pathway; L-methionine from L-homocysteine (MetE route): step 1/1. In terms of biological role, catalyzes the transfer of a methyl group from 5-methyltetrahydrofolate to homocysteine resulting in methionine formation. This Shigella flexneri protein is 5-methyltetrahydropteroyltriglutamate--homocysteine methyltransferase.